The sequence spans 386 residues: Threonine--tRNA ligase editing subunit (386 aa).

The protein belongs to the class-II aminoacyl-tRNA synthetase family. Archaea-specific ThrRS editing domain subfamily. As to quaternary structure, probably interacts with its catalytic subunit (AC Q97VW8); a subunit fusion (in the order edit-catalytic) is fully functional.

The protein localises to the cytoplasm. Freestanding tRNA editing subunit of threonine--tRNA ligase, the catalytic subunit is AC Q97VW8. Deacylates (edits) mischarged L-seryl-tRNA(Thr) in trans, removing L-serine, has no aminoacylation activity. In vitro when both subunits are present, or if the 2 subunits are fused, L-seryl-tRNA(Thr) is no longer produced. Has no activity on correctly acylated L-seryl-tRNA(Ser) or L-threonyl-tRNA(Thr). Editing is probably catalyzed by the 2'-OH of A76 of tRNA(Thr). The protein is Threonine--tRNA ligase editing subunit of Saccharolobus solfataricus (strain ATCC 35092 / DSM 1617 / JCM 11322 / P2) (Sulfolobus solfataricus).